The sequence spans 308 residues: Porphobilinogen deaminase (308 aa).

Cys241 carries the post-translational modification S-(dipyrrolylmethanemethyl)cysteine.

The protein belongs to the HMBS family. Monomer. Dipyrromethane is required as a cofactor.

It catalyses the reaction 4 porphobilinogen + H2O = hydroxymethylbilane + 4 NH4(+). Its pathway is porphyrin-containing compound metabolism; protoporphyrin-IX biosynthesis; coproporphyrinogen-III from 5-aminolevulinate: step 2/4. In terms of biological role, tetrapolymerization of the monopyrrole PBG into the hydroxymethylbilane pre-uroporphyrinogen in several discrete steps. The chain is Porphobilinogen deaminase from Staphylococcus carnosus (strain TM300).